The chain runs to 293 residues: 4-hydroxy-tetrahydrodipicolinate synthase (293 aa).

Pyruvate is bound at residue threonine 45. Residue tyrosine 133 is the Proton donor/acceptor of the active site. Residue lysine 161 is the Schiff-base intermediate with substrate of the active site. Pyruvate is bound at residue isoleucine 203.

It belongs to the DapA family. As to quaternary structure, homotetramer; dimer of dimers.

The protein localises to the cytoplasm. The enzyme catalyses L-aspartate 4-semialdehyde + pyruvate = (2S,4S)-4-hydroxy-2,3,4,5-tetrahydrodipicolinate + H2O + H(+). The protein operates within amino-acid biosynthesis; L-lysine biosynthesis via DAP pathway; (S)-tetrahydrodipicolinate from L-aspartate: step 3/4. Its function is as follows. Catalyzes the condensation of (S)-aspartate-beta-semialdehyde [(S)-ASA] and pyruvate to 4-hydroxy-tetrahydrodipicolinate (HTPA). The sequence is that of 4-hydroxy-tetrahydrodipicolinate synthase from Pseudoalteromonas atlantica (strain T6c / ATCC BAA-1087).